Consider the following 600-residue polypeptide: MIKYIRNFSIIAHIDHGKSTLSDRLIQTCGGLNEREMTSQVLDSMELERERGITIKSQNVTLNYKSKSGQPYQLNLIDTPGHVDFSYEVSRSLAACEGALLIVDVTQGVEAQTVANYRIAKEMNLKIIVALNKIDLSTADPNRASQEIKNIIGIDVNNAIQCSAKTGYGIPELLECLIHDIPHPQGDPCAPLQALIIDSWFNQYLGVVSLICIKNGKLYKGDVLKSMNTGQKYTVDQIGIFTPKQVKREILDCGEVGWLVCANKNIIKTPVGDTFTLSTHPAKKACHGFKKLQPYVYAGLFPIGSKNQKIFRDALYKLSLNDSSLFYEPERSEFLGLGFRCGFLGLLHLDIIQERLRREYSLDLLVTAPMVVYEILTIDNRIIYVDSPSKLLSLTKIKEIREPVVLCNILLPKKYLGEIISLCIKKRGTQIDIIYHSTQVTLTYELPMSEIILNFFDQIKSASHGYASFEYKFSRFQRSNIVCIEILINKKRIDALTVITHQEQSIYHGRLLVNKLQKLIPRQQFDIVIQATIGKRIISRGIVKQLRKNVLAKCHGGDITRKKKLLYNQKEGKKRMKQIGNVNLPHTVFLAVFDVNNNKK.

Residues 3-185 (KYIRNFSIIA…CLIHDIPHPQ (183 aa)) form the tr-type G domain. GTP is bound by residues 15–20 (DHGKST) and 132–135 (NKID).

Belongs to the TRAFAC class translation factor GTPase superfamily. Classic translation factor GTPase family. LepA subfamily.

The protein localises to the cell inner membrane. It carries out the reaction GTP + H2O = GDP + phosphate + H(+). Functionally, required for accurate and efficient protein synthesis under certain stress conditions. May act as a fidelity factor of the translation reaction, by catalyzing a one-codon backward translocation of tRNAs on improperly translocated ribosomes. Back-translocation proceeds from a post-translocation (POST) complex to a pre-translocation (PRE) complex, thus giving elongation factor G a second chance to translocate the tRNAs correctly. Binds to ribosomes in a GTP-dependent manner. The sequence is that of Elongation factor 4 from Blochmanniella pennsylvanica (strain BPEN).